A 588-amino-acid chain; its full sequence is Pre-mRNA 3'-end-processing factor FIP1 (588 aa).

The segment covering 1 to 10 has biased composition (basic and acidic residues); it reads MSAGEVERLV. 3 disordered regions span residues 1 to 81, 223 to 291, and 334 to 588; these read MSAG…EDDV, QGRT…ESPD, and VDNN…TPAE. The interval 1 to 96 is sufficient for interaction with PAPOLA; that stretch reads MSAGEVERLV…DIKTGAPQYG (96 aa). A necessary for stimulating PAPOLA activity region spans residues 1–341; it reads MSAGEVERLV…TAVDNNFSKP (341 aa). Composition is skewed to acidic residues over residues 19-40 and 66-80; these read GDEEEEWLYGDENEVERPEEEN and TEDDSDSDSDDDEDD. Phosphoserine is present on residues serine 70, serine 72, and serine 74. Residues 122–228 are sufficient for interaction with CPSF4; it reads KGVDLDAPGS…FKVQQGRTGN (107 aa). A compositionally biased stretch (low complexity) spans 259 to 270; it reads STSSQSQTSTAS. Positions 280–291 are enriched in basic and acidic residues; that stretch reads WQDRYGRAESPD. A Phosphoserine modification is found at serine 289. The span at 340-398 shows a compositional bias: pro residues; it reads KPPPFFPPGAPPTHLPPPPFLPPPPTVSTAPPLIPPPGIPITVPPPGFPPPPGAPPPSL. Tyrosine 420 carries the post-translational modification Phosphotyrosine. The segment at 437–588 is sufficient for interaction with CPSF1 and CSTF3; that stretch reads SLVDTSKQWD…QESTEATPAE (152 aa). Basic and acidic residues predominate over residues 448-486; that stretch reads YARREKDRDRERDRDRERDRDRDRERERTRERERERDHS. The tract at residues 451–484 is arg/Asp/Glu-rich domain; it reads REKDRDRERDRDRERDRDRDRERERTRERERERD. Serine 486 is subject to Phosphoserine. Position 488 is a phosphothreonine (threonine 488). 2 positions are modified to phosphoserine: serine 490 and serine 494. The segment covering 495 to 522 has biased composition (basic and acidic residues); it reads DEERYRYREYAERGYERHRASREKEERH. A compositionally biased stretch (basic residues) spans 536 to 545; the sequence is KSSRSNSRRR. The residue at position 548 (serine 548) is a Phosphoserine. Over residues 554-564 the composition is skewed to basic residues; the sequence is HRRHKHKKSKR.

It belongs to the FIP1 family. As to quaternary structure, component of the cleavage and polyadenylation specificity factor (CPSF) complex, composed of CPSF1, CPSF2, CPSF3, CPSF4 and FIP1L1. Found in a complex with CPSF1, FIP1L1 and PAPOLA. Interacts with CPSF1, CPSF4, CSTF2 and CSTF3. Interacts with AHCYL1 (when phosphorylated); the interaction is direct and associates AHCYL1 with the CPSF complex and RNA. Interacts with PAPOLA; the interaction seems to be increased by the interaction with AHCYL1. Interacts with NUDT21/CPSF5; this interaction occurs in a RNA sequence-specific manner. Interacts (preferentially via unphosphorylated form and Arg/Glu/Asp-rich domain) with CPSF6 (via Arg/Ser-rich domain); this interaction mediates, at least in part, the interaction between the CFIm and CPSF complexes and may be inhibited by CPSF6 hyper-phosphorylation. Interacts (preferentially via unphosphorylated form and Arg/Asp/Glu-rich domain) with CPSF7 (via Arg/Ser-rich domain); this interaction mediates, at least in part, the interaction between the CFIm and CPSF complexes and may be inhibited by CPSF7 hyper-phosphorylation.

It is found in the nucleus. Its function is as follows. Component of the cleavage and polyadenylation specificity factor (CPSF) complex that plays a key role in pre-mRNA 3'-end formation, recognizing the AAUAAA signal sequence and interacting with poly(A) polymerase and other factors to bring about cleavage and poly(A) addition. FIP1L1 contributes to poly(A) site recognition and stimulates poly(A) addition. Binds to U-rich RNA sequence elements surrounding the poly(A) site. May act to tether poly(A) polymerase to the CPSF complex. The sequence is that of Pre-mRNA 3'-end-processing factor FIP1 (FIP1L1) from Pongo abelii (Sumatran orangutan).